A 469-amino-acid chain; its full sequence is MGHQVLGLGIAGWSAARLLRAQGKEVWVWDEQDSELLRQRQAELEREGIPVHLGQPFQLLPGVKQVVVSPGIAWDHPLLQEARRQGIEVVGEAELAWPFLEHLPWVGITGTNGKSTTTALVAEMFKVAGLEGIPCGNIGLPLSQVALETWQGRRQPAWIVAELSSYQLEASRHLMQSSPGSPPRIGVWTTFTPDHLERHGTLERYAGFKARLLQRAQWRVVNGEDPYLFRRRQDWENTYWVSLQDPQADVFLRGSTLYIQGEAVAELEDFAERCPGSHNLQNLLLAAAAAHLAGIPNTAIQGAIRSFAGMPHRLERVAQIQVGSTPIRFVNDSKATNYEAGWVALNALSPPIILIAGGRAKQGDPSAWLRLIQAKVARVLLIGEAAPALAQALQEIRYTDLEILPTLDVAVERAFVAACSLAQALDNPAQPITVLLSPACASFDQYSSFEHRGHHFRACCQALVGSLEC.

Glycine 110–threonine 116 contributes to the ATP binding site.

This sequence belongs to the MurCDEF family.

It localises to the cytoplasm. The enzyme catalyses UDP-N-acetyl-alpha-D-muramoyl-L-alanine + D-glutamate + ATP = UDP-N-acetyl-alpha-D-muramoyl-L-alanyl-D-glutamate + ADP + phosphate + H(+). The protein operates within cell wall biogenesis; peptidoglycan biosynthesis. In terms of biological role, cell wall formation. Catalyzes the addition of glutamate to the nucleotide precursor UDP-N-acetylmuramoyl-L-alanine (UMA). This is UDP-N-acetylmuramoylalanine--D-glutamate ligase from Synechococcus sp. (strain JA-3-3Ab) (Cyanobacteria bacterium Yellowstone A-Prime).